Reading from the N-terminus, the 181-residue chain is Adenine phosphoribosyltransferase (181 aa).

Belongs to the purine/pyrimidine phosphoribosyltransferase family. In terms of assembly, homodimer.

Its subcellular location is the cytoplasm. It catalyses the reaction AMP + diphosphate = 5-phospho-alpha-D-ribose 1-diphosphate + adenine. Its pathway is purine metabolism; AMP biosynthesis via salvage pathway; AMP from adenine: step 1/1. In terms of biological role, catalyzes a salvage reaction resulting in the formation of AMP, that is energically less costly than de novo synthesis. This chain is Adenine phosphoribosyltransferase, found in Rhodopseudomonas palustris (strain ATCC BAA-98 / CGA009).